The primary structure comprises 578 residues: Putative multidrug export ATP-binding/permease protein SA1683 (578 aa).

The Cytoplasmic segment spans residues 1 to 15 (MIKRYLQFVKPYKYR). Residues 16–36 (IFATIIVGIIKFGIPMLIPLL) traverse the membrane as a helical segment. An ABC transmembrane type-1 domain is found at 16-306 (IFATIIVGII…LVASFTTLTQ (291 aa)). At 37–59 (IKYAIDGVINNHALTTDEKVHHL) the chain is on the extracellular side. Residues 60–80 (TIAIGIALFIFVIVRPPIEFI) traverse the membrane as a helical segment. Over 81–138 (RQYLAQWTSNKILYDIRKKLYNHLQALSARFYANNQVGQVISRVINDVEQTKDFILTG) the chain is Cytoplasmic. The helical transmembrane segment at 139 to 159 (LMNIWLDCITIIIALSIMFFL) threads the bilayer. Topologically, residues 160–162 (DVK) are extracellular. The chain crosses the membrane as a helical span at residues 163–183 (LTLAALFIFPFYILTVYVFFG). The Cytoplasmic portion of the chain corresponds to 184–244 (RLRKLTRERS…TRALKHTRWN (61 aa)). Residues 245–263 (AYSFAAINTVTDIGPIIVI) traverse the membrane as a helical segment. Over 264–269 (GVGAYL) the chain is Extracellular. The helical transmembrane segment at 270–287 (AISGSITVGTLAAFVGYL) threads the bilayer. The Cytoplasmic portion of the chain corresponds to 288–578 (ELLFGPLRRL…YEHLYSIQNL (291 aa)). Residues 340 to 575 (IDIDHVSFQY…QGAYEHLYSI (236 aa)) form the ABC transporter domain. An ATP-binding site is contributed by 374 to 381 (GMSGGGKS).

Belongs to the ABC transporter superfamily. In terms of assembly, homodimer.

It is found in the cell membrane. In terms of biological role, may be involved in multidrug export. Transmembrane domains (TMD) form a pore in the cell membrane and the ATP-binding domain (NBD) is responsible for energy generation. In Staphylococcus aureus (strain N315), this protein is Putative multidrug export ATP-binding/permease protein SA1683.